We begin with the raw amino-acid sequence, 438 residues long: Trigger factor (438 aa).

The PPIase FKBP-type domain occupies 160–245 (DDKVTIDFVG…VKKIQQAELP (86 aa)).

Belongs to the FKBP-type PPIase family. Tig subfamily.

Its subcellular location is the cytoplasm. The enzyme catalyses [protein]-peptidylproline (omega=180) = [protein]-peptidylproline (omega=0). Its function is as follows. Involved in protein export. Acts as a chaperone by maintaining the newly synthesized protein in an open conformation. Functions as a peptidyl-prolyl cis-trans isomerase. In Francisella tularensis subsp. novicida (strain U112), this protein is Trigger factor.